The primary structure comprises 41 residues: Photosystem I reaction center subunit IX (41 aa).

A helical membrane pass occupies residues 7–27 (YLSTAPVLATVWMIITAGILI).

The protein belongs to the PsaJ family.

The protein localises to the cellular thylakoid membrane. May help in the organization of the PsaE and PsaF subunits. This Trichodesmium erythraeum (strain IMS101) protein is Photosystem I reaction center subunit IX.